We begin with the raw amino-acid sequence, 743 residues long: Mitochondrial exoribonuclease DSS-1 (743 aa).

Residues 1–67 (MTPRRVAKLV…KELLHLQRSL (67 aa)) constitute a mitochondrion transit peptide. The region spanning 186-542 (THNPAYAIDS…VHHQLKVWLW (357 aa)) is the RNB domain. The tract at residues 320-357 (VGNQHHHTERESTQASPAKREEGKKGMVASGGTSSCRP) is disordered. Residues 325 to 344 (HHTERESTQASPAKREEGKK) are compositionally biased toward basic and acidic residues.

The protein belongs to the RNR ribonuclease family. As to quaternary structure, component of the mitochondrial 3' processome (MPsome) complex composed at least of terminal uridylyltransferase KRET1/TUT1, 3'-5' exonuclease DSS1, MPSS1, MPSS2 and MPSS3. Within the complex, interacts with KRET1 and MPSS2. Component of the mitochondrial degradosome complex composed at least of 3'-5' exonuclease DSS1 and helicase SUV3. Within the complex, interacts with helicase SUV3.

It localises to the mitochondrion. The enzyme catalyses Exonucleolytic cleavage in the 3'- to 5'-direction to yield nucleoside 5'-phosphates.. Its function is as follows. 3'-5'exoribonuclease which is involved in the post-transcriptional processing, editing and degradation of mitochondrial RNAs, including mRNAs, rRNAs and guided RNAs (gRNA). As part of the mitochondrial 3' processome (MPsome), involved in the maturation of guided RNA (gRNA) precursors by catalyzing the processive 3'-5' degradation of uridylated gRNA precursors. Plays a role in the degradation of 12S rRNA processing intermediates and maturation by-products. The protein is Mitochondrial exoribonuclease DSS-1 of Trypanosoma brucei brucei.